We begin with the raw amino-acid sequence, 338 residues long: Lipoate-protein ligase A (338 aa).

Residues 29 to 216 enclose the BPL/LPL catalytic domain; the sequence is PATQRVLFLW…AFFAHYGERV (188 aa). Residues Arg71, 76–79, and Lys134 each bind ATP; that span reads GAVF. Lys134 is a (R)-lipoate binding site.

This sequence belongs to the LplA family. In terms of assembly, monomer.

Its subcellular location is the cytoplasm. It carries out the reaction L-lysyl-[lipoyl-carrier protein] + (R)-lipoate + ATP = N(6)-[(R)-lipoyl]-L-lysyl-[lipoyl-carrier protein] + AMP + diphosphate + H(+). It functions in the pathway protein modification; protein lipoylation via exogenous pathway; protein N(6)-(lipoyl)lysine from lipoate: step 1/2. Its pathway is protein modification; protein lipoylation via exogenous pathway; protein N(6)-(lipoyl)lysine from lipoate: step 2/2. Functionally, catalyzes both the ATP-dependent activation of exogenously supplied lipoate to lipoyl-AMP and the transfer of the activated lipoyl onto the lipoyl domains of lipoate-dependent enzymes. The polypeptide is Lipoate-protein ligase A (Salmonella schwarzengrund (strain CVM19633)).